The primary structure comprises 725 residues: Manganese-exporting P-type ATPase (725 aa).

One can recognise an HMA domain in the interval 25–92; it reads GRMRIQIEWV…AISGAAHVAA (68 aa). 6 helical membrane passes run 101–119, 142–160, 165–179, 188–202, 335–359, and 365–383; these read HSSDIRNIEVLRMAIGAAA, LVASGVTIFTGYPFLRGAL, TGTDALVSVATIASL, LAVLWLLNIGEYLQD, VGENFSRCFVPTSFVVSAITLAITK, and MTVLLIACPCAVGLATPTA. Asp-416 functions as the 4-aspartylphosphate intermediate in the catalytic mechanism. Mg(2+)-binding residues include Asp-416, Thr-418, and Asp-618. 2 helical membrane-spanning segments follow: residues 669 to 688 and 698 to 717; these read AVEVIRENYGMSIAVNAAGL and PVLAAVLHNASSVAVVANSS.

Belongs to the cation transport ATPase (P-type) (TC 3.A.3) family. Type IB subfamily.

The protein localises to the cell membrane. The catalysed reaction is Mn(2+)(in) + ATP + H2O = Mn(2+)(out) + ADP + phosphate + H(+). Its function is as follows. High affinity, slow turnover Mn(2+) transporting ATPase. The protein is Manganese-exporting P-type ATPase (ctpC) of Mycobacterium leprae (strain TN).